Consider the following 84-residue polypeptide: Sulfur carrier protein TusA (84 aa).

Cys19 acts as the Cysteine persulfide intermediate in catalysis.

Belongs to the sulfur carrier protein TusA family. In terms of assembly, interacts with IscS.

Its subcellular location is the cytoplasm. It participates in tRNA modification. Sulfur carrier protein involved in sulfur trafficking in the cell. Part of a sulfur-relay system required for 2-thiolation during synthesis of 2-thiouridine of the modified wobble base 5-methylaminomethyl-2-thiouridine (mnm(5)s(2)U) in tRNA. Interacts with IscS and stimulates its cysteine desulfurase activity. Accepts an activated sulfur from IscS, which is then transferred to TusD, and thus determines the direction of sulfur flow from IscS to 2-thiouridine formation. Also appears to be involved in sulfur transfer for the biosynthesis of molybdopterin. This Sodalis glossinidius (strain morsitans) protein is Sulfur carrier protein TusA.